The primary structure comprises 551 residues: MMALVRDRRAHYVMSIVIRWVHCFSSSLRGTFGTRWEAMKAKATELRVCCARRKREAREFKPPQMRGSTRLNISDDLKIGFFSTDHATQTDSSEILSVKELSSSTQKLAQMMKSLQVDFGFLKQLLQLKFEDRLKEESLSLFTILHDRILEIEKHYQQNEDKMRKSFNQQLADAIAVIKGMYQQFFEVEEENVSLQDASTVKTNILLRKLKEKEEVIKELKEELDQYKDFGFHKMESFAKETSSPKSNLEKENLEYKVENERLLQIISELEEEIQINLKENSGLEDELISMKEMAEKDHKTIQKLMDSRDRLREELHYEKSLVQDVINKQKEDKEMRKKYGSLSVKVARSAKGREASLSPWPKSPPSTTALRPHSATMSVSSAGAQKAKMPKKALKEDQAVVEDKHGLESQIEALKANLENEKKKVERFRKEADRLNKSWEKRFFILRNSFHVLKNEMFTRHTLFRQFAVLADTSFNYIKVKPLLVQSRTTMTAISSSSHCTSSIDGKHVDVVSDQAALQLSPKGKLSESPKEESLEEPSMRQSSPAETVD.

The transit peptide at 1–36 (MMALVRDRRAHYVMSIVIRWVHCFSSSLRGTFGTRW) directs the protein to the mitochondrion. Positions 203-315 (TNILLRKLKE…MDSRDRLREE (113 aa)) form a coiled coil. The tract at residues 354–389 (REASLSPWPKSPPSTTALRPHSATMSVSSAGAQKAK) is disordered. Positions 366–384 (PSTTALRPHSATMSVSSAG) are enriched in polar residues. Positions 405 to 439 (KHGLESQIEALKANLENEKKKVERFRKEADRLNKS) form a coiled coil. Residues 519–551 (LQLSPKGKLSESPKEESLEEPSMRQSSPAETVD) are disordered. A compositionally biased stretch (polar residues) spans 541–551 (MRQSSPAETVD).

In terms of assembly, interacts with NOD2.

The protein resides in the mitochondrion. This is an uncharacterized protein from Homo sapiens (Human).